The primary structure comprises 396 residues: Proteinase-activated receptor 4 (396 aa).

The signal sequence occupies residues 1–16 (MCWPLLYPLVLGLSIS). Residues 17 to 59 (LAEGIQTPSIYDDVESTRGSHEGPLGPTVELKEPKSSDKPNPR) constitute a propeptide, removed for receptor activation. Residues 28–62 (DDVESTRGSHEGPLGPTVELKEPKSSDKPNPRGYP) are disordered. Basic and acidic residues predominate over residues 46–57 (ELKEPKSSDKPN). Residues 60–94 (GYPGKFCANDSDTLELPASSQALLLGWVPTRLVPA) lie on the Extracellular side of the membrane. N-linked (GlcNAc...) asparagine glycosylation occurs at asparagine 68. A helical transmembrane segment spans residues 95 to 115 (LYGLVVAVGLPANGLALWVLA). The Cytoplasmic segment spans residues 116–120 (TRVPR). The helical transmembrane segment at 121–141 (LPSTILLMNLAVADLLLALVL) threads the bilayer. The Extracellular portion of the chain corresponds to 142-162 (PPRLAYHLRGQRWPFGEAACR). Residues cysteine 161 and cysteine 240 are joined by a disulfide bond. The chain crosses the membrane as a helical span at residues 163–183 (VATAALYGHMYGSVLLLAAVS). Residues 184–203 (LDRYLALVHPLRARALRGQR) lie on the Cytoplasmic side of the membrane. A helical membrane pass occupies residues 204–224 (LTTGLCLVAWLSAATLALPLT). Topologically, residues 225–255 (LHRQTFRLAGSDRMLCHDALPLTEQTSHWRP) are extracellular. Residues 256-276 (AFICLAVLGCFVPLLAMGLCY) form a helical membrane-spanning segment. The Cytoplasmic portion of the chain corresponds to 277-295 (GATLRALAANGQRYSHALR). Residues 296 to 316 (LTALVLFSAVASFTPSNVLLV) form a helical membrane-spanning segment. Over 317-331 (LHYSNPSPEAWGNLY) the chain is Extracellular. The chain crosses the membrane as a helical span at residues 332–355 (GAYVPSLALSTLNSCVDPFIYYYV). The Cytoplasmic portion of the chain corresponds to 356 to 396 (SHEFREKVRAMLCRQPEASSSSQASREAGSRGTAICSSTLL).

It belongs to the G-protein coupled receptor 1 family. Post-translationally, a proteolytic cleavage generates a new N-terminus that functions as a tethered ligand. Highly expressed in the spleen. Slight expression in the heart, lung, skeletal muscle and kidney. No detectable expression in brain, liver or testis. Also detected in platelets.

The protein resides in the cell membrane. Functionally, receptor for activated thrombin or trypsin coupled to G proteins that stimulate phosphoinositide hydrolysis. May play a role in platelets activation. The sequence is that of Proteinase-activated receptor 4 (F2rl3) from Mus musculus (Mouse).